The sequence spans 226 residues: Phosphoglycolate phosphatase (226 aa).

Catalysis depends on Asp5, which acts as the Nucleophile. Residues Asp5 and Asp7 each contribute to the Mg(2+) site. Lys142 lines the substrate pocket. Residues Asp164 and Asp168 each contribute to the Mg(2+) site.

Belongs to the archaeal SPP-like hydrolase family. Requires Mg(2+) as cofactor.

It carries out the reaction 2-phosphoglycolate + H2O = glycolate + phosphate. Functionally, catalyzes the dephosphorylation of 2-phosphoglycolate. This Sulfurisphaera tokodaii (strain DSM 16993 / JCM 10545 / NBRC 100140 / 7) (Sulfolobus tokodaii) protein is Phosphoglycolate phosphatase.